A 363-amino-acid chain; its full sequence is tRNA/tmRNA (uracil-C(5))-methyltransferase (363 aa).

S-adenosyl-L-methionine is bound by residues glutamine 187, tyrosine 215, asparagine 220, glutamate 236, and aspartate 296. Cysteine 321 (nucleophile) is an active-site residue. The active-site Proton acceptor is the glutamate 355.

Belongs to the class I-like SAM-binding methyltransferase superfamily. RNA M5U methyltransferase family. TrmA subfamily.

The catalysed reaction is uridine(54) in tRNA + S-adenosyl-L-methionine = 5-methyluridine(54) in tRNA + S-adenosyl-L-homocysteine + H(+). It carries out the reaction uridine(341) in tmRNA + S-adenosyl-L-methionine = 5-methyluridine(341) in tmRNA + S-adenosyl-L-homocysteine + H(+). In terms of biological role, dual-specificity methyltransferase that catalyzes the formation of 5-methyluridine at position 54 (m5U54) in all tRNAs, and that of position 341 (m5U341) in tmRNA (transfer-mRNA). The protein is tRNA/tmRNA (uracil-C(5))-methyltransferase of Haemophilus influenzae (strain 86-028NP).